The primary structure comprises 195 residues: RILP-like protein 2 (195 aa).

Residues 8 to 92 (SPTQAFDKDV…RTETDRVVAE (85 aa)) form the RH1 domain. Positions 58 to 149 (LEMFETMVNK…AQEELQLYKS (92 aa)) form a coiled coil. The RH2 domain occupies 115–185 (RPRFTMQELK…ITEESKEKST (71 aa)).

This sequence belongs to the RILPL family.

The protein localises to the cytoplasm. It is found in the cytosol. It localises to the cytoskeleton. The protein resides in the microtubule organizing center. Its subcellular location is the centrosome. The protein localises to the cell projection. It is found in the cilium. Involved in cell shape and neuronal morphogenesis, positively regulating the establishment and maintenance of dendritic spines. Plays a role in cellular protein transport. The chain is RILP-like protein 2 (rilpl2) from Danio rerio (Zebrafish).